We begin with the raw amino-acid sequence, 254 residues long: 5-oxoprolinase subunit A (254 aa).

Belongs to the LamB/PxpA family. Forms a complex composed of PxpA, PxpB and PxpC.

The catalysed reaction is 5-oxo-L-proline + ATP + 2 H2O = L-glutamate + ADP + phosphate + H(+). Its function is as follows. Catalyzes the cleavage of 5-oxoproline to form L-glutamate coupled to the hydrolysis of ATP to ADP and inorganic phosphate. The sequence is that of 5-oxoprolinase subunit A from Acinetobacter baumannii (strain AB307-0294).